Reading from the N-terminus, the 220-residue chain is Putative cobalt transport protein CbiM (220 aa).

5 helical membrane-spanning segments follow: residues 6–26 (GFLP…IVVY), 43–63 (ALVA…FPSV), 74–94 (GLLV…IVLL), 98–118 (LLLA…MGII), and 182–202 (IFTL…AAVI).

This sequence belongs to the CbiM family. Forms an energy-coupling factor (ECF) transporter complex composed of an ATP-binding protein (A component, CbiO), a transmembrane protein (T component, CbiQ) and 2 possible substrate-capture proteins (S components, CbiM and CbiN) of unknown stoichimetry.

The protein localises to the cell membrane. It functions in the pathway cofactor biosynthesis; adenosylcobalamin biosynthesis. Part of the energy-coupling factor (ECF) transporter complex CbiMNOQ involved in cobalt import. In Haloquadratum walsbyi (strain DSM 16790 / HBSQ001), this protein is Putative cobalt transport protein CbiM.